Reading from the N-terminus, the 727-residue chain is NADH-ubiquinone oxidoreductase 75 kDa subunit, mitochondrial (727 aa).

A mitochondrion-targeting transit peptide spans 1–23; that stretch reads MLRIPVRKALVGLSKSPKGCVRT. In terms of domain architecture, 2Fe-2S ferredoxin-type spans 30-108; the sequence is NLIEVFVDGQ…GWNILTNSEK (79 aa). [2Fe-2S] cluster is bound by residues Cys64, Cys75, and Cys78. Lys84 carries the N6-acetyllysine modification. Cys92 contacts [2Fe-2S] cluster. A 4Fe-4S His(Cys)3-ligated-type domain is found at 108–147; sequence KSKKAREGVMEFLLANHPLDCPICDQGGECDLQDQSMMFG. 8 residues coordinate [4Fe-4S] cluster: His124, Cys128, Cys131, Cys137, Cys176, Cys179, Cys182, and Cys226. The 4Fe-4S Mo/W bis-MGD-type domain occupies 245-301; sequence TRKTESIDVMDAVGSNIVVSTRTGEVMRILPRMHEDINEEWISDKTRFAYDGLKRQR. 3 positions are modified to N6-acetyllysine: Lys467, Lys499, and Lys709.

This sequence belongs to the complex I 75 kDa subunit family. As to quaternary structure, core subunit of respiratory chain NADH dehydrogenase (Complex I) which is composed of 45 different subunits. This is the largest subunit of complex I and it is a component of the iron-sulfur (IP) fragment of the enzyme. Complex I associates with ubiquinol-cytochrome reductase complex (Complex III) to form supercomplexes. Interacts with MDM2 and AKAP1. [2Fe-2S] cluster serves as cofactor. Requires [4Fe-4S] cluster as cofactor.

The protein localises to the mitochondrion inner membrane. The enzyme catalyses a ubiquinone + NADH + 5 H(+)(in) = a ubiquinol + NAD(+) + 4 H(+)(out). Its function is as follows. Core subunit of the mitochondrial membrane respiratory chain NADH dehydrogenase (Complex I) which catalyzes electron transfer from NADH through the respiratory chain, using ubiquinone as an electron acceptor. Essential for catalysing the entry and efficient transfer of electrons within complex I. Plays a key role in the assembly and stability of complex I and participates in the association of complex I with ubiquinol-cytochrome reductase complex (Complex III) to form supercomplexes. The polypeptide is NADH-ubiquinone oxidoreductase 75 kDa subunit, mitochondrial (NDUFS1) (Macaca fascicularis (Crab-eating macaque)).